Here is a 588-residue protein sequence, read N- to C-terminus: Transport ATP-binding protein AarD (588 aa).

The ABC transmembrane type-1 domain maps to 24 to 316 (LRISMLLGVV…LGTYYHAKAQ (293 aa)). A run of 6 helical transmembrane segments spans residues 29 to 49 (LLGVVSGLLIIAQAWFLAVIL), 62 to 82 (LLTPFILLLAVFVLRALLTVI), 149 to 169 (IIPIMILIAIFPFNWAAALIL), 170 to 190 (FATAPLIPIFMALVGLGAADA), 250 to 270 (SGVLEFFASISIAIVAVYFGF), and 276 to 296 (LNFGSYGLPVTMFAGFLALIL). Residues 350 to 583 (IEANKLEIYS…EGPFARLLAH (234 aa)) enclose the ABC transporter domain. 383–390 (GQSGAGKS) contacts ATP.

Belongs to the ABC transporter superfamily.

It is found in the cell inner membrane. Somehow involved in the cytochrome D branch of aerobic respiration. Seems to be a component of a transport system. In Providencia stuartii, this protein is Transport ATP-binding protein AarD (aarD).